The primary structure comprises 116 residues: NADH-ubiquinone oxidoreductase chain 3 (116 aa).

Helical transmembrane passes span 4–24 (FMVM…LAFW), 56–76 (FFLV…LLPS), and 87–107 (FTLL…IYEW).

It belongs to the complex I subunit 3 family.

The protein resides in the mitochondrion membrane. It catalyses the reaction a ubiquinone + NADH + 5 H(+)(in) = a ubiquinol + NAD(+) + 4 H(+)(out). Functionally, core subunit of the mitochondrial membrane respiratory chain NADH dehydrogenase (Complex I) that is believed to belong to the minimal assembly required for catalysis. Complex I functions in the transfer of electrons from NADH to the respiratory chain. The immediate electron acceptor for the enzyme is believed to be ubiquinone. The chain is NADH-ubiquinone oxidoreductase chain 3 (MT-ND3) from Petromyzon marinus (Sea lamprey).